A 141-amino-acid polypeptide reads, in one-letter code: Large ribosomal subunit protein uL23B (141 aa).

The interval 1 to 22 (MSVGKAKGAQKTVQKGIHNKVA) is disordered.

It belongs to the universal ribosomal protein uL23 family. As to quaternary structure, component of the large ribosomal subunit (LSU). Mature yeast ribosomes consist of a small (40S) and a large (60S) subunit. The 40S small subunit contains 1 molecule of ribosomal RNA (18S rRNA) and at least 33 different proteins. The large 60S subunit contains 3 rRNA molecules (25S, 5.8S and 5S rRNA) and at least 46 different proteins. uL23 is associated with the polypeptide exit tunnel.

Its subcellular location is the cytoplasm. This protein binds to a specific region on the 26S rRNA. Functionally, component of the ribosome, a large ribonucleoprotein complex responsible for the synthesis of proteins in the cell. The small ribosomal subunit (SSU) binds messenger RNAs (mRNAs) and translates the encoded message by selecting cognate aminoacyl-transfer RNA (tRNA) molecules. The large subunit (LSU) contains the ribosomal catalytic site termed the peptidyl transferase center (PTC), which catalyzes the formation of peptide bonds, thereby polymerizing the amino acids delivered by tRNAs into a polypeptide chain. The nascent polypeptides leave the ribosome through a tunnel in the LSU and interact with protein factors that function in enzymatic processing, targeting, and the membrane insertion of nascent chains at the exit of the ribosomal tunnel. uL23 is a major component of the universal docking site for these factors at the polypeptide exit tunnel. The sequence is that of Large ribosomal subunit protein uL23B (rpl2502) from Schizosaccharomyces pombe (strain 972 / ATCC 24843) (Fission yeast).